Consider the following 284-residue polypeptide: Cell division protein FtsQ (284 aa).

Over 1–31 (MAQLPASMRRKRAAITSIHDKPPTRKQKLAN) the chain is Cytoplasmic. A helical membrane pass occupies residues 32 to 52 (AGGWVLLVIAFVVLAVGIYGL). The Periplasmic portion of the chain corresponds to 53 to 284 (YKVITDATVA…SIAGGTKAKP (232 aa)). A POTRA domain is found at 59–128 (ATVAKLEVVG…NGIRVRVMPR (70 aa)).

It belongs to the FtsQ/DivIB family. FtsQ subfamily. In terms of assembly, part of a complex composed of FtsB, FtsL and FtsQ.

The protein resides in the cell inner membrane. In terms of biological role, essential cell division protein. May link together the upstream cell division proteins, which are predominantly cytoplasmic, with the downstream cell division proteins, which are predominantly periplasmic. May control correct divisome assembly. In Acinetobacter oleivorans (strain JCM 16667 / KCTC 23045 / DR1), this protein is Cell division protein FtsQ.